Consider the following 195-residue polypeptide: Glycerol-3-phosphate acyltransferase 1 (195 aa).

The next 5 membrane-spanning stretches (helical) occupy residues 6–26 (VILT…GHFL), 52–72 (LGIA…FLVV), 74–94 (LGLK…AVAG), 117–137 (LAVY…LTFL), and 168–188 (FGLG…ISLF).

This sequence belongs to the PlsY family. As to quaternary structure, probably interacts with PlsX.

Its subcellular location is the cell membrane. It catalyses the reaction an acyl phosphate + sn-glycerol 3-phosphate = a 1-acyl-sn-glycero-3-phosphate + phosphate. It participates in lipid metabolism; phospholipid metabolism. Functionally, catalyzes the transfer of an acyl group from acyl-phosphate (acyl-PO(4)) to glycerol-3-phosphate (G3P) to form lysophosphatidic acid (LPA). This enzyme utilizes acyl-phosphate as fatty acyl donor, but not acyl-CoA or acyl-ACP. This chain is Glycerol-3-phosphate acyltransferase 1, found in Moorella thermoacetica (strain ATCC 39073 / JCM 9320).